Consider the following 399-residue polypeptide: uncharacterized protein (399 aa).

10 consecutive transmembrane segments (helical) span residues 7–27 (FSAL…LYLI), 33–53 (FLQI…FEVP), 79–99 (AFFP…IWAL), 131–151 (LLIT…SLNI), 153–173 (FPFL…SVFI), 208–228 (VLLI…ISRY), 242–262 (SLGY…TLTI), 296–316 (PLGI…HPIV), 335–355 (LNSG…GIIS), and 357–377 (AFGL…PIIL).

It belongs to the major facilitator superfamily. Drug:H(+) antiporter-3 (DHA3) (TC 2.A.1.21) family.

Its subcellular location is the cell membrane. This is an uncharacterized protein from Bacillus subtilis (strain 168).